A 338-amino-acid polypeptide reads, in one-letter code: 2-methyl-6-phytyl-1,4-hydroquinone methyltransferase, chloroplastic (338 aa).

Residues 1–51 (MASLMLNGAITFPKGLGSPGSNLHARSIPRPTLLSVTRTSTPRLSVATRCS) constitute a chloroplast transit peptide. The Chloroplast intermembrane segment spans residues 52 to 307 (SSSVSSSRPS…VNNPFSFLGR (256 aa)). Residues 114–123 (VVDVGGGTGF) are SAM motif I. The tract at residues 159-172 (CKIVEGDAEDLPFP) is SAM motif II. The SAM motif III stretch occupies residues 200–213 (RVLKIGGKACLIGP). The chain crosses the membrane as a helical span at residues 308-328 (FLLGTLAAAWFVLIPIYMWIK). At 329–338 (DQIVPKDQPI) the chain is on the stromal side.

This sequence belongs to the class I-like SAM-binding methyltransferase superfamily. MPBQ/MBSQ MT family.

Its subcellular location is the plastid. It localises to the chloroplast inner membrane. The catalysed reaction is 2-methyl-6-phytyl-1,4-benzene-1,4-diol + S-adenosyl-L-methionine = 2,3-dimethyl-6-phytylbenzene-1,4-diol + S-adenosyl-L-homocysteine + H(+). It carries out the reaction 2-methyl-6-(all-trans-nonaprenyl)benzene-1,4-diol + S-adenosyl-L-methionine = plastoquinol-9 + S-adenosyl-L-homocysteine + H(+). It catalyses the reaction 6-geranylgeranyl-2-methylbenzene-1,4-diol + S-adenosyl-L-methionine = 6-geranylgeranyl-2,3-dimethylbenzene-1,4-diol + S-adenosyl-L-homocysteine + H(+). Its pathway is cofactor biosynthesis; tocopherol biosynthesis. Involved in a key methylation step in both tocopherols (vitamin E) and plastoquinone synthesis. Catalyzes the conversion of 2-methyl-6-phytyl-1,4-hydroquinone (MPBQ) to 2,3-dimethyl-6-phytyl-1,4-hydroquinone (DMPQ, a substrate for tocopherol cyclase), and 2-methyl-6-solanyl-1,4-benzoquinone (MSBQ) to plastoquinone. This Arabidopsis thaliana (Mouse-ear cress) protein is 2-methyl-6-phytyl-1,4-hydroquinone methyltransferase, chloroplastic (VTE3).